The following is a 237-amino-acid chain: Cysteine-rich venom protein DIS3 (237 aa).

An N-terminal signal peptide occupies residues 1–18; sequence MFVFILLSLAAVLQQSFG. The SCP domain occupies 37–165; the sequence is VDKHNAFRRS…SYDYFYVCQY (129 aa). Disulfide bonds link Cys-74-Cys-152, Cys-91-Cys-166, Cys-147-Cys-163, Cys-185-Cys-192, Cys-188-Cys-197, Cys-201-Cys-234, and Cys-219-Cys-232. The region spanning 201 to 234 is the ShKT domain; that stretch reads CSREDVFTNCKSLVAKSNCQDDYIRKNCLATCFC.

It belongs to the CRISP family. Expressed by the venom gland.

It is found in the secreted. In terms of biological role, weakly blocks contraction of smooth muscle elicited by high potassium-induced depolarization, but does not block caffeine-stimulated contraction. May target voltage-gated calcium channels on smooth muscle. The protein is Cysteine-rich venom protein DIS3 of Dispholidus typus (Boomslang).